The sequence spans 329 residues: Isopenicillin N synthase (329 aa).

Isopenicillin N-binding residues include Arg-87, Tyr-91, Ser-183, and Tyr-189. N-[(5S)-5-amino-5-carboxypentanoyl]-L-cysteinyl-D-valine contacts are provided by Arg-87, Tyr-91, Ser-183, Tyr-189, His-212, and Asp-214. The Fe2OG dioxygenase domain maps to Ser-180 to Gly-286. 3 residues coordinate Fe(2+): His-212, Asp-214, and His-268. Arg-277 contacts 2-oxoglutarate. Isopenicillin N is bound at residue Ser-279. Position 279 (Ser-279) interacts with N-[(5S)-5-amino-5-carboxypentanoyl]-L-cysteinyl-D-valine.

This sequence belongs to the iron/ascorbate-dependent oxidoreductase family. It depends on Fe cation as a cofactor. L-ascorbate serves as cofactor.

It carries out the reaction N-[(5S)-5-amino-5-carboxypentanoyl]-L-cysteinyl-D-valine + O2 = isopenicillin N + 2 H2O. It functions in the pathway antibiotic biosynthesis; penicillin G biosynthesis; penicillin G from L-alpha-aminoadipate and L-cysteine and L-valine: step 2/3. In terms of biological role, removes, in the presence of oxygen, 4 hydrogen atoms from delta-L-(alpha-aminoadipyl)-L-cysteinyl-D-valine (ACV) to form the azetidinone and thiazolidine rings of isopenicillin. This Streptomyces clavuligerus protein is Isopenicillin N synthase (pcbC).